A 364-amino-acid chain; its full sequence is tRNA/tmRNA (uracil-C(5))-methyltransferase (364 aa).

S-adenosyl-L-methionine is bound by residues Gln188, Tyr216, Asn221, Glu237, and Asp297. Residue Cys322 is the Nucleophile of the active site. The active-site Proton acceptor is Glu356.

This sequence belongs to the class I-like SAM-binding methyltransferase superfamily. RNA M5U methyltransferase family. TrmA subfamily.

It catalyses the reaction uridine(54) in tRNA + S-adenosyl-L-methionine = 5-methyluridine(54) in tRNA + S-adenosyl-L-homocysteine + H(+). The enzyme catalyses uridine(341) in tmRNA + S-adenosyl-L-methionine = 5-methyluridine(341) in tmRNA + S-adenosyl-L-homocysteine + H(+). Dual-specificity methyltransferase that catalyzes the formation of 5-methyluridine at position 54 (m5U54) in all tRNAs, and that of position 341 (m5U341) in tmRNA (transfer-mRNA). The protein is tRNA/tmRNA (uracil-C(5))-methyltransferase of Teredinibacter turnerae (strain ATCC 39867 / T7901).